The following is an 855-amino-acid chain: DNA mismatch repair protein MutS (855 aa).

618–625 (GPNMGGKS) serves as a coordination point for ATP.

The protein belongs to the DNA mismatch repair MutS family.

This protein is involved in the repair of mismatches in DNA. It is possible that it carries out the mismatch recognition step. This protein has a weak ATPase activity. This chain is DNA mismatch repair protein MutS, found in Shewanella loihica (strain ATCC BAA-1088 / PV-4).